Here is a 270-residue protein sequence, read N- to C-terminus: tRNA (guanine-N(1)-)-methyltransferase (270 aa).

Residues Gly117 and 137 to 142 (IGDYVL) contribute to the S-adenosyl-L-methionine site.

It belongs to the RNA methyltransferase TrmD family. In terms of assembly, homodimer.

The protein localises to the cytoplasm. The catalysed reaction is guanosine(37) in tRNA + S-adenosyl-L-methionine = N(1)-methylguanosine(37) in tRNA + S-adenosyl-L-homocysteine + H(+). In terms of biological role, specifically methylates guanosine-37 in various tRNAs. The protein is tRNA (guanine-N(1)-)-methyltransferase of Heliobacterium modesticaldum (strain ATCC 51547 / Ice1).